The primary structure comprises 220 residues: ATP phosphoribosyltransferase (220 aa).

The protein belongs to the ATP phosphoribosyltransferase family. Short subfamily. In terms of assembly, heteromultimer composed of HisG and HisZ subunits.

The protein localises to the cytoplasm. The enzyme catalyses 1-(5-phospho-beta-D-ribosyl)-ATP + diphosphate = 5-phospho-alpha-D-ribose 1-diphosphate + ATP. It participates in amino-acid biosynthesis; L-histidine biosynthesis; L-histidine from 5-phospho-alpha-D-ribose 1-diphosphate: step 1/9. Functionally, catalyzes the condensation of ATP and 5-phosphoribose 1-diphosphate to form N'-(5'-phosphoribosyl)-ATP (PR-ATP). Has a crucial role in the pathway because the rate of histidine biosynthesis seems to be controlled primarily by regulation of HisG enzymatic activity. This chain is ATP phosphoribosyltransferase, found in Janthinobacterium sp. (strain Marseille) (Minibacterium massiliensis).